Consider the following 314-residue polypeptide: Acetyl-coenzyme A carboxylase carboxyl transferase subunit beta (314 aa).

Residues 37–307 (LWQKCPACDA…MSLPALEPTY (271 aa)) enclose the CoA carboxyltransferase N-terminal domain. Zn(2+)-binding residues include Cys41, Cys44, Cys60, and Cys63. The C4-type zinc finger occupies 41 to 63 (CPACDALTYTKDLQQNWQVCPSC).

Belongs to the AccD/PCCB family. Acetyl-CoA carboxylase is a heterohexamer composed of biotin carboxyl carrier protein (AccB), biotin carboxylase (AccC) and two subunits each of ACCase subunit alpha (AccA) and ACCase subunit beta (AccD). Requires Zn(2+) as cofactor.

Its subcellular location is the cytoplasm. It catalyses the reaction N(6)-carboxybiotinyl-L-lysyl-[protein] + acetyl-CoA = N(6)-biotinyl-L-lysyl-[protein] + malonyl-CoA. Its pathway is lipid metabolism; malonyl-CoA biosynthesis; malonyl-CoA from acetyl-CoA: step 1/1. In terms of biological role, component of the acetyl coenzyme A carboxylase (ACC) complex. Biotin carboxylase (BC) catalyzes the carboxylation of biotin on its carrier protein (BCCP) and then the CO(2) group is transferred by the transcarboxylase to acetyl-CoA to form malonyl-CoA. The protein is Acetyl-coenzyme A carboxylase carboxyl transferase subunit beta of Synechococcus sp. (strain JA-3-3Ab) (Cyanobacteria bacterium Yellowstone A-Prime).